Here is a 695-residue protein sequence, read N- to C-terminus: MAQLDTLDLVVLVVLLVGSAAYFTKGTYWAVPKDPYAASGPAMNGGAKAGKSRDIIEKMEETGKNCVIFYGSQTGTAEDYASRLAKEGSQRFGLKTMVADLEDYDYENLDKFPEDKVAFFVMATYGEGEPTDNAVEFYQFISGEDVAFESGASADDKPLSSLKYVTFGLGNNTYEHYQAMVRNLDAALTKLGAQRIGDAGEGDDGAGTMEEDFLAWKEPMWTALSEAMNLQEREAVYEPVFSVTEDESLSPEDEAVYLGEPTKGHRDGTPSGPYSAHNPFIAPIVESRELFNVKDRNCLHMEISIAGSNLSYQTGDHIAIWPTNAGAEVDRFLQVFGLENKRHSVINIKGIDVTAKVPIPTPTTYDAAVRYYMEIAAPVSRQFVATLAAFAPDEETKAEIVRLGSDKDYFHEKISNQCFTIAQALQSVTSKPFSAVPFSLLIEGLNKLQPRYYSISSSSMVQKDKISITAVVESTRLPGAAHLVKGVTTNYLLALKQKQNGDPSPDPHGLTYTITGPRNKYDGIHVPVHVRHSNFKLPSDPSRPIIMVGPGTGVAPFRGFIQERAALAAKGENVGPTVLFFGCRRRDEDFMYADEFKTYQEQLGDKLQIITAFSRETSQKVYVQHRLREHSDLVSSLLKQKANFYVCGDAANMAREVNLVLGQIIAQQRGLPAERAEEMVKHMRSSGSYQEDVWS.

Residues 1–8 (MAQLDTLD) lie on the Lumenal side of the membrane. Residues 9–31 (LVVLVVLLVGSAAYFTKGTYWAV) traverse the membrane as a helical segment. Residues 32 to 695 (PKDPYAASGP…SGSYQEDVWS (664 aa)) lie on the Cytoplasmic side of the membrane. The Flavodoxin-like domain maps to 66–221 (CVIFYGSQTG…DFLAWKEPMW (156 aa)). Residues 72–77 (SQTGTA), 123–126 (ATYG), 169–178 (LGNNTYEHYQ), and Asp204 contribute to the FMN site. Residues 277–538 (HNPFIAPIVE…HVRHSNFKLP (262 aa)) enclose the FAD-binding FR-type domain. Arg296 is a binding site for NADP(+). Residues 451-454 (RYYS), 469-471 (TAV), and 486-489 (GVTT) each bind FAD. NADP(+)-binding positions include Thr552, 614–615 (SR), 620–624 (KVYVQ), and Glu656. Trp694 serves as a coordination point for FAD.

Belongs to the NADPH--cytochrome P450 reductase family. It in the N-terminal section; belongs to the flavodoxin family. This sequence in the C-terminal section; belongs to the flavoprotein pyridine nucleotide cytochrome reductase family. FAD is required as a cofactor. Requires FMN as cofactor.

Its subcellular location is the endoplasmic reticulum membrane. It is found in the mitochondrion outer membrane. The protein localises to the cell membrane. It catalyses the reaction 2 oxidized [cytochrome P450] + NADPH = 2 reduced [cytochrome P450] + NADP(+) + H(+). Its function is as follows. This enzyme is required for electron transfer from NADP to cytochrome P450 in microsomes. It can also provide electron transfer to heme oxygenase and cytochrome B5. Involved in ergosterol biosynthesis. The chain is NADPH--cytochrome P450 reductase from Aspergillus terreus (strain NIH 2624 / FGSC A1156).